The following is a 569-amino-acid chain: AA9 family lytic polysaccharide monooxygenase A (569 aa).

An N-terminal signal peptide occupies residues 1-16; that stretch reads MRIFSLALGFLPLVAG. Cu(2+)-binding residues include H17 and H99. C59 and C189 are oxidised to a cystine. Residue N112 is glycosylated (N-linked (GlcNAc...) asparagine). Residues H174 and Q184 each contribute to the O2 site. Y186 contributes to the Cu(2+) binding site. N-linked (GlcNAc...) asparagine glycans are attached at residues N244 and N381. Residues 399–424 are compositionally biased toward low complexity; sequence AADATATATATTEDAEATTAAEAAAT. The interval 399–439 is disordered; that stretch reads AADATATATATTEDAEATTAAEAAATSGAGRPGRGHGHGRG. An N-linked (GlcNAc...) asparagine glycan is attached at N472.

Belongs to the polysaccharide monooxygenase AA9 family. The cofactor is Cu(2+).

Its subcellular location is the secreted. It catalyses the reaction [(1-&gt;4)-beta-D-glucosyl]n+m + reduced acceptor + O2 = 4-dehydro-beta-D-glucosyl-[(1-&gt;4)-beta-D-glucosyl]n-1 + [(1-&gt;4)-beta-D-glucosyl]m + acceptor + H2O.. Its function is as follows. Lytic polysaccharide monooxygenase (LPMO) that depolymerizes crystalline and amorphous polysaccharides via the oxidation of scissile alpha- or beta-(1-4)-glycosidic bonds, yielding C4 oxidation products. Catalysis by LPMOs requires the reduction of the active-site copper from Cu(II) to Cu(I) by a reducing agent and H(2)O(2) or O(2) as a cosubstrate. In Emericella nidulans (strain FGSC A4 / ATCC 38163 / CBS 112.46 / NRRL 194 / M139) (Aspergillus nidulans), this protein is AA9 family lytic polysaccharide monooxygenase A.